A 439-amino-acid chain; its full sequence is Lipid-A-disaccharide synthase (439 aa).

Residues 1-35 (MKEIGNRESGIVDGQRNGASVGSDPTALPIPHSPL) are disordered.

It belongs to the LpxB family.

It carries out the reaction a lipid X + a UDP-2-N,3-O-bis[(3R)-3-hydroxyacyl]-alpha-D-glucosamine = a lipid A disaccharide + UDP + H(+). The protein operates within bacterial outer membrane biogenesis; LPS lipid A biosynthesis. Condensation of UDP-2,3-diacylglucosamine and 2,3-diacylglucosamine-1-phosphate to form lipid A disaccharide, a precursor of lipid A, a phosphorylated glycolipid that anchors the lipopolysaccharide to the outer membrane of the cell. The chain is Lipid-A-disaccharide synthase from Xanthomonas euvesicatoria pv. vesicatoria (strain 85-10) (Xanthomonas campestris pv. vesicatoria).